A 468-amino-acid polypeptide reads, in one-letter code: Soluble pyridine nucleotide transhydrogenase (468 aa).

36 to 45 lines the FAD pocket; sequence ERYKNVGGGC.

This sequence belongs to the class-I pyridine nucleotide-disulfide oxidoreductase family. FAD is required as a cofactor.

It is found in the cytoplasm. The enzyme catalyses NAD(+) + NADPH = NADH + NADP(+). Its function is as follows. Conversion of NADPH, generated by peripheral catabolic pathways, to NADH, which can enter the respiratory chain for energy generation. The polypeptide is Soluble pyridine nucleotide transhydrogenase (Hamiltonella defensa subsp. Acyrthosiphon pisum (strain 5AT)).